The chain runs to 296 residues: Probable lipid kinase YegS-like (296 aa).

The DAGKc domain maps to 1–130; that stretch reads MPHTLLILNG…IDLAQVNGEH (130 aa). Residues Thr37, 63–69, and Thr92 contribute to the ATP site; that span reads GDGTINE. Residues Leu212, Asp215, and Leu217 each contribute to the Mg(2+) site. Glu268 (proton acceptor) is an active-site residue.

It belongs to the diacylglycerol/lipid kinase family. YegS lipid kinase subfamily. Requires Mg(2+) as cofactor. The cofactor is Ca(2+).

It is found in the cytoplasm. Functionally, probably phosphorylates lipids; the in vivo substrate is unknown. The polypeptide is Probable lipid kinase YegS-like (Yersinia pestis bv. Antiqua (strain Angola)).